The chain runs to 209 residues: Cytidylate kinase (209 aa).

7–15 (GVAASGKSS) is an ATP binding site.

It belongs to the cytidylate kinase family. Type 1 subfamily.

It is found in the cytoplasm. It carries out the reaction CMP + ATP = CDP + ADP. The catalysed reaction is dCMP + ATP = dCDP + ADP. This is Cytidylate kinase from Deinococcus geothermalis (strain DSM 11300 / CIP 105573 / AG-3a).